Consider the following 3411-residue polypeptide: Genome polyprotein (3411 aa).

Topologically, residues 1–104 (MSGRKAQGKT…LSSRKRRSHD (104 aa)) are cytoplasmic. Positions 38–72 (PGPSRGVQGFIFFFLFNILTGKKITAHLKRLWKML) are hydrophobic; homodimerization of capsid protein C. Positions 102 to 121 (SHDVLTVQFLILGMLLMTGG) are cleaved as a propeptide — ER anchor for the capsid protein C, removed in mature form by serine protease NS3. The chain crosses the membrane as a helical span at residues 105–125 (VLTVQFLILGMLLMTGGVTLV). Over 126 to 244 (RKNRWLLLNV…GERQLQKIER (119 aa)) the chain is Extracellular. Residues asparagine 134 and asparagine 150 are each glycosylated (N-linked (GlcNAc...) asparagine; by host). A helical transmembrane segment spans residues 245–265 (WFVRNPFFAVTALTIAYLVGS). The Cytoplasmic segment spans residues 266–270 (NMTQR). The chain crosses the membrane as a helical span at residues 271-285 (VVIALLVLAVGPAYS). The Extracellular segment spans residues 286-730 (AHCIGITDRD…TVFGSAFQGL (445 aa)). Disulfide bonds link cysteine 288–cysteine 315, cysteine 345–cysteine 401, cysteine 345–cysteine 406, cysteine 359–cysteine 390, cysteine 377–cysteine 401, cysteine 377–cysteine 406, cysteine 467–cysteine 568, and cysteine 585–cysteine 615. The segment at 383-396 (DRGWGNGCGLFGKG) is fusion peptide. Residues 731-751 (FGGLNWITKVIIGAVLIWVGI) form a helical membrane-spanning segment. Residues 752–757 (NTRNMT) are Extracellular-facing. A helical transmembrane segment spans residues 758 to 778 (MSMSMILVGVIMMFLSLGVGA). Residues 779-1132 (DQGCAINFAK…LVRSWVTAGE (354 aa)) are Extracellular-facing. Intrachain disulfides connect cysteine 782/cysteine 793, cysteine 833/cysteine 921, cysteine 957/cysteine 1002, cysteine 1058/cysteine 1107, cysteine 1069/cysteine 1091, and cysteine 1090/cysteine 1094. 2 N-linked (GlcNAc...) asparagine; by host glycosylation sites follow: asparagine 908 and asparagine 986. A helical transmembrane segment spans residues 1133–1153 (IHAVPFGLVSMMIALEVVLRK). Residues 1154–1201 (RQGPKQMLVGGVVLLGAMLVGQVTLLDLLKLTVAVGLHFHEMNNGGDA) are Cytoplasmic-facing. Residues 1202 to 1222 (MYMALIAAFSVRPGLLIGFGL) traverse the membrane as a helical segment. Residues 1223–1287 (RTLWSPRERL…ILPLMALLTP (65 aa)) are Lumenal-facing. Residues 1288-1308 (VTMAEVRLATMLFCTVVIIGV) traverse the membrane as a helical segment. Residues 1309 to 1355 (LYQNSKDTSMQKTIPLVALTLTSYLGLTQPFLGLCAFLATRIFGRRS) lie on the Cytoplasmic side of the membrane. The helical transmembrane segment at 1356–1376 (IPVNEALAAAGLVGVLAGLAF) threads the bilayer. The Lumenal portion of the chain corresponds to 1377–1378 (QE). The chain crosses the membrane as a helical span at residues 1379–1399 (MENFLGPIAVGGILMMLVSVA). At 1400–1456 (GRVDGLELKKLGEVAWEEEAEISGSSARYDVALSEQGEFKLLSEEKVPWDQVVMTSL) the chain is on the cytoplasmic side. The tract at residues 1407–1446 (LKKLGEVAWEEEAEISGSSARYDVALSEQGEFKLLSEEKV) is interacts with and activates NS3 protease. Residues 1457–1477 (ALVGAAIHPFALLLVLAGWLF) constitute an intramembrane region (helical). Over 1478–2157 (HVRGARRSGD…RNALSMMPEA (680 aa)) the chain is Cytoplasmic. A Peptidase S7 domain is found at 1485 to 1665 (SGDVLWDIPT…EVKEEGKEEL (181 aa)). Active-site charge relay system; for serine protease NS3 activity residues include histidine 1537, aspartate 1561, and serine 1622. The 157-residue stretch at 1669-1825 (PTMLKKGKTT…HSNGEIEDVQ (157 aa)) folds into the Helicase ATP-binding domain. An important for RNA-binding region spans residues 1673 to 1676 (KKGK). An ATP-binding site is contributed by 1682 to 1689 (FHPGAGKT). The short motif at 1773 to 1776 (DEAH) is the DEAH box element. The Helicase C-terminal domain maps to 1820–1997 (EIEDVQTDIP…VRGGMVAPLY (178 aa)). Position 1877 is an N6-acetyllysine; by host (lysine 1877). The tract at residues 1942-1961 (AAQRRGRIGRNPNRDGDSYY) is disordered. A helical transmembrane segment spans residues 2158–2178 (MTIVMLFILAGLLTSGMVIFF). The Lumenal portion of the chain corresponds to 2179-2186 (MSPKGISR). An intramembrane region (helical) is located at residues 2187–2207 (MSMAMGTMAGCGYLMFLGGVK). At 2208 to 2209 (PT) the chain is on the lumenal side. Residues 2210-2230 (HISYIMLIFFVLMVVVIPEPG) traverse the membrane as a helical segment. Over 2231–2241 (QQRSIQDNQVA) the chain is Cytoplasmic. A helical membrane pass occupies residues 2242–2262 (FLIIGILTLVSVVAANELGML). The Lumenal portion of the chain corresponds to 2263-2293 (EKTKEDLFGKKNSIPSSASPWSWPDLDLKPG). Residues 2294–2314 (AAWTVYVGIVTMLSPMLHHWI) constitute an intramembrane region (helical). The Lumenal portion of the chain corresponds to 2315–2360 (KVEYGNLSLSGIAQSASVLSFMDKGIPFMKMNISVIMLLISGWNSI). A helical membrane pass occupies residues 2361 to 2380 (TVMPLLCGIGCAMLHWSLIL). Topologically, residues 2381–2421 (PGIKAQQSKLAQRRVFHGVAKNPVVDGNPTVDIEEAPEMPV) are cytoplasmic. Residues 2422–2442 (LYEKKLALYLLLALSLASVAM) traverse the membrane as a helical segment. The Lumenal segment spans residues 2443-2445 (CRT). Residues 2446 to 2466 (PFSLAEGIVLASAALGPLIEG) traverse the membrane as a helical segment. Residues 2467–3411 (NTSLLWNGPM…DADLQPGELI (945 aa)) lie on the Cytoplasmic side of the membrane. The 265-residue stretch at 2507–2771 (GTANGKTLGE…DVTLPIGTRS (265 aa)) folds into the mRNA cap 0-1 NS5-type MT domain. Serine 2562 is a binding site for S-adenosyl-L-methionine. Serine 2562 is subject to Phosphoserine. The active-site For 2'-O-MTase activity is lysine 2567. Positions 2592, 2593, 2610, 2611, 2637, and 2638 each coordinate S-adenosyl-L-methionine. Residue aspartate 2652 is the For 2'-O-MTase activity of the active site. Isoleucine 2653 serves as a coordination point for S-adenosyl-L-methionine. Residues lysine 2688 and glutamate 2724 each act as for 2'-O-MTase activity in the active site. Tyrosine 2726 contributes to the S-adenosyl-L-methionine binding site. The Nuclear localization signal signature appears at 2878 to 2911 (RKIMKVVNRWLFRHLAREKNPRLCTKEEFIAKVR). Positions 2945, 2949, 2954, and 2957 each coordinate Zn(2+). Residues 3035–3187 (GGFYADDTAG…RPIDDRFGLA (153 aa)) enclose the RdRp catalytic domain. Residues histidine 3222, cysteine 3238, and cysteine 3357 each coordinate Zn(2+).

The protein in the N-terminal section; belongs to the class I-like SAM-binding methyltransferase superfamily. mRNA cap 0-1 NS5-type methyltransferase family. In terms of assembly, homodimer. Interacts (via N-terminus) with host EXOC1 (via C-terminus); this interaction results in EXOC1 degradation through the proteasome degradation pathway. As to quaternary structure, forms heterodimers with envelope protein E in the endoplasmic reticulum and Golgi. Homodimer; in the endoplasmic reticulum and Golgi. Interacts with protein prM. Interacts with non-structural protein 1. In terms of assembly, homodimer; Homohexamer when secreted. Interacts with envelope protein E. As to quaternary structure, interacts (via N-terminus) with serine protease NS3. Forms a heterodimer with serine protease NS3. May form homooligomers. In terms of assembly, forms a heterodimer with NS2B. Interacts with non-structural protein 2A (via N-terminus). Interacts with NS4B. Interacts with unphosphorylated RNA-directed RNA polymerase NS5; this interaction stimulates RNA-directed RNA polymerase NS5 guanylyltransferase activity. NS3 interacts with host PDCD6IP; this interaction contributes to virion release. As to quaternary structure, interacts with serine protease NS3. Homodimer. Interacts with host STAT2; this interaction prevents the establishment of cellular antiviral state. Interacts with serine protease NS3. Interacts with host TRIM23; this interaction leads to NS5 ubiquitination. Specific enzymatic cleavages in vivo yield mature proteins. The nascent capsid protein C contains a C-terminal hydrophobic domain that act as a signal sequence for translocation of prM into the lumen of the ER. Mature capsid protein C is cleaved at a site upstream of this hydrophobic domain by NS3. prM is cleaved in post-Golgi vesicles by a host furin, releasing the mature small envelope protein M, and peptide pr. Non-structural protein 2A-alpha, a C-terminally truncated form of non-structural protein 2A, results from partial cleavage by NS3. Specific enzymatic cleavages in vivo yield mature proteins peptide 2K acts as a signal sequence and is removed from the N-terminus of NS4B by the host signal peptidase in the ER lumen. Signal cleavage at the 2K-4B site requires a prior NS3 protease-mediated cleavage at the 4A-2K site. Post-translationally, cleaved in post-Golgi vesicles by a host furin, releasing the mature small envelope protein M, and peptide pr. This cleavage is incomplete as up to 30% of viral particles still carry uncleaved prM. In terms of processing, N-glycosylated. N-glycosylated. The excreted form is glycosylated and this is required for efficient secretion of the protein from infected cells. Post-translationally, polyubiquitinated; ubiquitination is probably mediated by host TRIM23 and is prerequisite for NS5-STAT2 interaction. NS5 is not ISGylated or sumoylated. In terms of processing, phosphorylated on serines residues. This phosphorylation may trigger NS5 nuclear localization. Acetylated by host KAT5. Acetylation modulates NS3 RNA-binding and -unwinding activities and plays an important role for viral replication.

Its subcellular location is the virion. The protein resides in the host nucleus. The protein localises to the host cytoplasm. It is found in the host perinuclear region. It localises to the secreted. Its subcellular location is the virion membrane. The protein resides in the host endoplasmic reticulum membrane. It carries out the reaction Selective hydrolysis of -Xaa-Xaa-|-Yaa- bonds in which each of the Xaa can be either Arg or Lys and Yaa can be either Ser or Ala.. It catalyses the reaction RNA(n) + a ribonucleoside 5'-triphosphate = RNA(n+1) + diphosphate. The catalysed reaction is a ribonucleoside 5'-triphosphate + H2O = a ribonucleoside 5'-diphosphate + phosphate + H(+). The enzyme catalyses ATP + H2O = ADP + phosphate + H(+). It carries out the reaction a 5'-end (5'-triphosphoguanosine)-ribonucleoside in mRNA + S-adenosyl-L-methionine = a 5'-end (N(7)-methyl 5'-triphosphoguanosine)-ribonucleoside in mRNA + S-adenosyl-L-homocysteine. It catalyses the reaction a 5'-end (N(7)-methyl 5'-triphosphoguanosine)-ribonucleoside in mRNA + S-adenosyl-L-methionine = a 5'-end (N(7)-methyl 5'-triphosphoguanosine)-(2'-O-methyl-ribonucleoside) in mRNA + S-adenosyl-L-homocysteine + H(+). Plays a role in virus budding by binding to the cell membrane and gathering the viral RNA into a nucleocapsid that forms the core of a mature virus particle. During virus entry, may induce genome penetration into the host cytoplasm after hemifusion induced by the surface proteins. Can migrate to the cell nucleus where it modulates host functions. In terms of biological role, inhibits RNA silencing by interfering with host Dicer. Its function is as follows. Prevents premature fusion activity of envelope proteins in trans-Golgi by binding to envelope protein E at pH6.0. After virion release in extracellular space, gets dissociated from E dimers. Functionally, acts as a chaperone for envelope protein E during intracellular virion assembly by masking and inactivating envelope protein E fusion peptide. prM is the only viral peptide matured by host furin in the trans-Golgi network probably to avoid catastrophic activation of the viral fusion activity in acidic Golgi compartment prior to virion release. prM-E cleavage is inefficient, and many virions are only partially matured. These uncleaved prM would play a role in immune evasion. May play a role in virus budding. Exerts cytotoxic effects by activating a mitochondrial apoptotic pathway through M ectodomain. May display a viroporin activity. In terms of biological role, binds to host cell surface receptor and mediates fusion between viral and cellular membranes. Envelope protein is synthesized in the endoplasmic reticulum in the form of heterodimer with protein prM. They play a role in virion budding in the ER, and the newly formed immature particle is covered with 60 spikes composed of heterodimer between precursor prM and envelope protein E. The virion is transported to the Golgi apparatus where the low pH causes dissociation of PrM-E heterodimers and formation of E homodimers. prM-E cleavage is inefficient, and many virions are only partially matured. These uncleaved prM would play a role in immune evasion. Its function is as follows. Involved in immune evasion, pathogenesis and viral replication. Once cleaved off the polyprotein, is targeted to three destinations: the viral replication cycle, the plasma membrane and the extracellular compartment. Essential for viral replication. Required for formation of the replication complex and recruitment of other non-structural proteins to the ER-derived membrane structures. Excreted as a hexameric lipoparticle that plays a role against host immune response. Antagonizing the complement function. Binds to the host macrophages and dendritic cells. Inhibits signal transduction originating from Toll-like receptor 3 (TLR3). Functionally, component of the viral RNA replication complex that functions in virion assembly and antagonizes the host immune response. Required cofactor for the serine protease function of NS3. May have membrane-destabilizing activity and form viroporins. In terms of biological role, displays three enzymatic activities: serine protease, NTPase and RNA helicase. NS3 serine protease, in association with NS2B, performs its autocleavage and cleaves the polyprotein at dibasic sites in the cytoplasm: C-prM, NS2A-NS2B, NS2B-NS3, NS3-NS4A, NS4A-2K and NS4B-NS5. NS3 RNA helicase binds RNA and unwinds dsRNA in the 3' to 5' direction. Also plays a role in virus assembly. Its function is as follows. Regulates the ATPase activity of the NS3 helicase activity. NS4A allows NS3 helicase to conserve energy during unwinding. Functionally, functions as a signal peptide for NS4B and is required for the interferon antagonism activity of the latter. Induces the formation of ER-derived membrane vesicles where the viral replication takes place. Inhibits interferon (IFN)-induced host STAT1 phosphorylation and nuclear translocation, thereby preventing the establishment of cellular antiviral state by blocking the IFN-alpha/beta pathway. In terms of biological role, replicates the viral (+) and (-) RNA genome, and performs the capping of genomes in the cytoplasm. NS5 methylates viral RNA cap at guanine N-7 and ribose 2'-O positions. Besides its role in RNA genome replication, also prevents the establishment of cellular antiviral state by blocking the interferon-alpha/beta (IFN-alpha/beta) signaling pathway. IFN-I induces binding of NS5 to host IFN-activated transcription factor STAT2, preventing its transcriptional activity. Host TRIM23 is the E3 ligase that interacts with and polyubiquitinates NS5 to promote its binding to STAT2 and trigger IFN-I signaling inhibition. The sequence is that of Genome polyprotein from Yellow fever virus (strain French neurotropic vaccine FNV) (YFV).